Reading from the N-terminus, the 415-residue chain is Mitochondrial distribution and morphology protein 12 (415 aa).

The 402-residue stretch at 1 to 402 folds into the SMP-LTD domain; that stretch reads MSFDINWSEL…WPSWVCFDLN (402 aa). The interval 53–146 is disordered; sequence EITIRHIGDP…PPLTDLRRSR (94 aa). 2 stretches are compositionally biased toward acidic residues: residues 62–75 and 92–103; these read PFDD…DDDE and NSSDDDEDDEYD.

The protein belongs to the MDM12 family. In terms of assembly, component of the ER-mitochondria encounter structure (ERMES) or MDM complex, composed of MMM1, MDM10, MDM12 and MDM34. An MMM1 homodimer associates with one molecule of MDM12 on each side in a pairwise head-to-tail manner, and the SMP-LTD domains of MMM1 and MDM12 generate a continuous hydrophobic tunnel for phospholipid trafficking.

It is found in the mitochondrion outer membrane. The protein resides in the endoplasmic reticulum membrane. Component of the ERMES/MDM complex, which serves as a molecular tether to connect the endoplasmic reticulum (ER) and mitochondria. Components of this complex are involved in the control of mitochondrial shape and protein biogenesis, and function in nonvesicular lipid trafficking between the ER and mitochondria. MDM12 is required for the interaction of the ER-resident membrane protein MMM1 and the outer mitochondrial membrane-resident beta-barrel protein MDM10. The MDM12-MMM1 subcomplex functions in the major beta-barrel assembly pathway that is responsible for biogenesis of all mitochondrial outer membrane beta-barrel proteins, and acts in a late step after the SAM complex. The MDM10-MDM12-MMM1 subcomplex further acts in the TOM40-specific pathway after the action of the MDM12-MMM1 complex. Essential for establishing and maintaining the structure of mitochondria and maintenance of mtDNA nucleoids. This is Mitochondrial distribution and morphology protein 12 from Debaryomyces hansenii (strain ATCC 36239 / CBS 767 / BCRC 21394 / JCM 1990 / NBRC 0083 / IGC 2968) (Yeast).